The chain runs to 447 residues: Ribosomal protein uS12 methylthiotransferase RimO (447 aa).

The region spanning 15–125 (PRVGFVSLGC…VMQAIHRHLP (111 aa)) is the MTTase N-terminal domain. Residues cysteine 24, cysteine 60, cysteine 89, cysteine 156, cysteine 160, and cysteine 163 each contribute to the [4Fe-4S] cluster site. Residues 142 to 379 (LTPKHYAYLK…MQWQEEISKK (238 aa)) form the Radical SAM core domain. The TRAM domain occupies 379 to 447 (KRLAGKKGRI…GIHDLWAKKI (69 aa)).

The protein belongs to the methylthiotransferase family. RimO subfamily. Requires [4Fe-4S] cluster as cofactor.

It localises to the cytoplasm. It catalyses the reaction L-aspartate(89)-[ribosomal protein uS12]-hydrogen + (sulfur carrier)-SH + AH2 + 2 S-adenosyl-L-methionine = 3-methylsulfanyl-L-aspartate(89)-[ribosomal protein uS12]-hydrogen + (sulfur carrier)-H + 5'-deoxyadenosine + L-methionine + A + S-adenosyl-L-homocysteine + 2 H(+). Its function is as follows. Catalyzes the methylthiolation of an aspartic acid residue of ribosomal protein uS12. This chain is Ribosomal protein uS12 methylthiotransferase RimO, found in Nitrosomonas europaea (strain ATCC 19718 / CIP 103999 / KCTC 2705 / NBRC 14298).